A 462-amino-acid polypeptide reads, in one-letter code: Gamma-aminobutyric acid receptor subunit alpha-5 (462 aa).

The first 31 residues, 1–31 (MDNGMFSSFIMIKNLLLFCISMNLASHFGFS), serve as a signal peptide directing secretion. Residues 32–260 (QMPTSSVKAE…FHLKRKIGYF (229 aa)) lie on the Extracellular side of the membrane. N-linked (GlcNAc...) asparagine glycosylation occurs at Asn45. A 4-aminobutanoate-binding site is contributed by Arg101. The N-linked (GlcNAc...) asparagine glycan is linked to Asn145. Thr164 is a binding site for 4-aminobutanoate. Cysteines 173 and 187 form a disulfide. 2 N-linked (GlcNAc...) asparagine glycosylation sites follow: Asn207 and Asn236. Helical transmembrane passes span 261–281 (VIQTYLPCIMTVILSQVSFWL), 287–308 (PARTVFGVTTVLTMTTLSISAR), and 319–340 (AMDWFIAVCYAFVFSALIEFAT). The Cytoplasmic portion of the chain corresponds to 341 to 427 (VNYFTKRGWA…TYNSISKIDK (87 aa)). Lys355 participates in a covalent cross-link: Glycyl lysine isopeptide (Lys-Gly) (interchain with G-Cter in ubiquitin). Residues 375–412 (TNAYTTGKMTHPPNIPKEQTPAGTTNASSASVKPEDKA) form a disordered region. Over residues 395–405 (PAGTTNASSAS) the composition is skewed to polar residues. A helical membrane pass occupies residues 428-448 (MSRIIFPLLFGTFNLVYWATY).

Belongs to the ligand-gated ion channel (TC 1.A.9) family. Gamma-aminobutyric acid receptor (TC 1.A.9.5) subfamily. GABRA5 sub-subfamily. Heteropentamer, formed by a combination of alpha (GABRA1-6), beta (GABRB1-3), gamma (GABRG1-3), delta (GABRD), epsilon (GABRE), rho (GABRR1-3), pi (GABRP) and theta (GABRQ) chains, each subunit exhibiting distinct physiological and pharmacological properties.

The protein resides in the postsynaptic cell membrane. The protein localises to the cell membrane. The enzyme catalyses chloride(in) = chloride(out). Its function is as follows. Alpha subunit of the heteropentameric ligand-gated chloride channel gated by gamma-aminobutyric acid (GABA), a major inhibitory neurotransmitter in the brain. GABA-gated chloride channels, also named GABA(A) receptors (GABAAR), consist of five subunits arranged around a central pore and contain GABA active binding site(s) located at the alpha and beta subunit interface(s). When activated by GABA, GABAARs selectively allow the flow of chloride anions across the cell membrane down their electrochemical gradient. GABAARs containing alpha-5/GABRA5 subunits are mainly extrasynaptic and contribute to the tonic GABAergic inhibition in the hippocampus. Extrasynaptic alpha-5-containing GABAARs in CA1 pyramidal neurons play a role in learning and memory processes. The protein is Gamma-aminobutyric acid receptor subunit alpha-5 (GABRA5) of Bos taurus (Bovine).